A 306-amino-acid chain; its full sequence is MRNFVWAEELDADRIDDVRALLLAARETDGRPEVEPDGPLPGEFSGPRHLLCFSGEGAAAELVGYAHLDVRGDAFGRQVAELIVHPAHRRRGHGTALLEEVLRHADRLRIWSHGDHPAAARLAERFGLSRARELLVMSASSAEQEWPKPRLPEGVRLRTFVPGQDEEAVIAVNARAFDWHPEQSQFDVKALREAQRESWFDADGFFLAENAEGRVVGFHWTKVHPANPNRFGGRPVGEVYVVGVDPDAQGGGLGKALTLAGLRHLRQRGLEQVILYVEGDNAPAIAVYRKLGFETVETDVQYAQGS.

N-acetyltransferase domains are found at residues 5 to 162 (VWAE…TFVP) and 155 to 306 (VRLR…AQGS). Residues 82–84 (LIV) and 90–95 (RRGHGT) contribute to the acetyl-CoA site. 1D-myo-inositol 2-(L-cysteinylamino)-2-deoxy-alpha-D-glucopyranoside is bound by residues glutamate 182, lysine 222, and glutamate 238. Residues 242 to 244 (VGV) and 249 to 255 (QGGGLGK) contribute to the acetyl-CoA site. Tyrosine 276 is a 1D-myo-inositol 2-(L-cysteinylamino)-2-deoxy-alpha-D-glucopyranoside binding site.

This sequence belongs to the acetyltransferase family. MshD subfamily. Monomer.

It catalyses the reaction 1D-myo-inositol 2-(L-cysteinylamino)-2-deoxy-alpha-D-glucopyranoside + acetyl-CoA = mycothiol + CoA + H(+). Functionally, catalyzes the transfer of acetyl from acetyl-CoA to desacetylmycothiol (Cys-GlcN-Ins) to form mycothiol. The sequence is that of Mycothiol acetyltransferase from Saccharomonospora viridis (strain ATCC 15386 / DSM 43017 / JCM 3036 / CCUG 5913 / NBRC 12207 / NCIMB 9602 / P101) (Thermoactinomyces viridis).